The primary structure comprises 474 residues: Bifunctional protein HldE (474 aa).

Positions 1-317 (MKLSMPRFDR…RRAVQREQGS (317 aa)) are ribokinase. 194-197 (NLAE) provides a ligand contact to ATP. Residue aspartate 263 is part of the active site. The interval 343–474 (FTNGCFDILH…GIVEKIRRQP (132 aa)) is cytidylyltransferase.

The protein in the N-terminal section; belongs to the carbohydrate kinase PfkB family. This sequence in the C-terminal section; belongs to the cytidylyltransferase family. As to quaternary structure, homodimer.

The enzyme catalyses D-glycero-beta-D-manno-heptose 7-phosphate + ATP = D-glycero-beta-D-manno-heptose 1,7-bisphosphate + ADP + H(+). It catalyses the reaction D-glycero-beta-D-manno-heptose 1-phosphate + ATP + H(+) = ADP-D-glycero-beta-D-manno-heptose + diphosphate. Its pathway is nucleotide-sugar biosynthesis; ADP-L-glycero-beta-D-manno-heptose biosynthesis; ADP-L-glycero-beta-D-manno-heptose from D-glycero-beta-D-manno-heptose 7-phosphate: step 1/4. It functions in the pathway nucleotide-sugar biosynthesis; ADP-L-glycero-beta-D-manno-heptose biosynthesis; ADP-L-glycero-beta-D-manno-heptose from D-glycero-beta-D-manno-heptose 7-phosphate: step 3/4. In terms of biological role, catalyzes the phosphorylation of D-glycero-D-manno-heptose 7-phosphate at the C-1 position to selectively form D-glycero-beta-D-manno-heptose-1,7-bisphosphate. Catalyzes the ADP transfer from ATP to D-glycero-beta-D-manno-heptose 1-phosphate, yielding ADP-D-glycero-beta-D-manno-heptose. The polypeptide is Bifunctional protein HldE (Azotobacter vinelandii (strain DJ / ATCC BAA-1303)).